Here is an 89-residue protein sequence, read N- to C-terminus: Small ribosomal subunit protein uS15 (89 aa).

Belongs to the universal ribosomal protein uS15 family. In terms of assembly, part of the 30S ribosomal subunit. Forms a bridge to the 50S subunit in the 70S ribosome, contacting the 23S rRNA.

In terms of biological role, one of the primary rRNA binding proteins, it binds directly to 16S rRNA where it helps nucleate assembly of the platform of the 30S subunit by binding and bridging several RNA helices of the 16S rRNA. Forms an intersubunit bridge (bridge B4) with the 23S rRNA of the 50S subunit in the ribosome. The chain is Small ribosomal subunit protein uS15 from Synechocystis sp. (strain ATCC 27184 / PCC 6803 / Kazusa).